Here is a 174-residue protein sequence, read N- to C-terminus: Co-chaperone protein HscB homolog (174 aa).

The 73-residue stretch at 2-74 (NYFELFKFSP…IRRAEHMLSL (73 aa)) folds into the J domain.

The protein belongs to the HscB family. In terms of assembly, interacts with HscA and stimulates its ATPase activity.

Co-chaperone involved in the maturation of iron-sulfur cluster-containing proteins. Seems to help targeting proteins to be folded toward HscA. In Shewanella baltica (strain OS155 / ATCC BAA-1091), this protein is Co-chaperone protein HscB homolog.